A 162-amino-acid chain; its full sequence is Functional amyloid chaperone FapA (162 aa).

An N-terminal signal peptide occupies residues 1–28 (MSGSSLRIVVPALLVIVGSVPVSLPAHA).

This sequence belongs to the FapA family. As to quaternary structure, monomer in solution. Interacts with FapC but not FapB in vitro.

The protein resides in the periplasm. In terms of biological role, an intrinsically disordered chaperone for fibril amyloid FapC that guards against fibrillation within the periplasm. Upon overexpression of the endogenous six-gene locus (fapA-fapF), cells form large clumps during liquid growth, make large amounts of biofilm and produce amyloid fibrils. This chain is Functional amyloid chaperone FapA, found in Pseudomonas aeruginosa (strain ATCC 15692 / DSM 22644 / CIP 104116 / JCM 14847 / LMG 12228 / 1C / PRS 101 / PAO1).